Here is a 90-residue protein sequence, read N- to C-terminus: MSKKTFEELFTELQHKAANGDPSTSRTAELVGKGVHAIGKKVVEEAAEVWMAAEYEGKDAAAEEISQLLYHVQVMMVARGISLDDVYAHL.

The protein belongs to the PRA-PH family.

Its subcellular location is the cytoplasm. The enzyme catalyses 1-(5-phospho-beta-D-ribosyl)-ATP + H2O = 1-(5-phospho-beta-D-ribosyl)-5'-AMP + diphosphate + H(+). It participates in amino-acid biosynthesis; L-histidine biosynthesis; L-histidine from 5-phospho-alpha-D-ribose 1-diphosphate: step 2/9. This Streptomyces avermitilis (strain ATCC 31267 / DSM 46492 / JCM 5070 / NBRC 14893 / NCIMB 12804 / NRRL 8165 / MA-4680) protein is Phosphoribosyl-ATP pyrophosphatase.